Reading from the N-terminus, the 194-residue chain is Peptidyl-tRNA hydrolase (194 aa).

Position 21 (tyrosine 21) interacts with tRNA. Histidine 26 serves as the catalytic Proton acceptor. Tyrosine 72, asparagine 74, and asparagine 120 together coordinate tRNA.

It belongs to the PTH family. As to quaternary structure, monomer.

It localises to the cytoplasm. It carries out the reaction an N-acyl-L-alpha-aminoacyl-tRNA + H2O = an N-acyl-L-amino acid + a tRNA + H(+). Functionally, hydrolyzes ribosome-free peptidyl-tRNAs (with 1 or more amino acids incorporated), which drop off the ribosome during protein synthesis, or as a result of ribosome stalling. Its function is as follows. Catalyzes the release of premature peptidyl moieties from peptidyl-tRNA molecules trapped in stalled 50S ribosomal subunits, and thus maintains levels of free tRNAs and 50S ribosomes. In Halorhodospira halophila (strain DSM 244 / SL1) (Ectothiorhodospira halophila (strain DSM 244 / SL1)), this protein is Peptidyl-tRNA hydrolase.